A 417-amino-acid polypeptide reads, in one-letter code: Serine hydroxymethyltransferase (417 aa).

(6S)-5,6,7,8-tetrahydrofolate is bound by residues Leu121 and 125 to 127 (GHL). An N6-(pyridoxal phosphate)lysine modification is found at Lys229. Position 355 to 357 (355 to 357 (SPF)) interacts with (6S)-5,6,7,8-tetrahydrofolate.

The protein belongs to the SHMT family. In terms of assembly, homodimer. The cofactor is pyridoxal 5'-phosphate.

It is found in the cytoplasm. The catalysed reaction is (6R)-5,10-methylene-5,6,7,8-tetrahydrofolate + glycine + H2O = (6S)-5,6,7,8-tetrahydrofolate + L-serine. The protein operates within one-carbon metabolism; tetrahydrofolate interconversion. It participates in amino-acid biosynthesis; glycine biosynthesis; glycine from L-serine: step 1/1. Catalyzes the reversible interconversion of serine and glycine with tetrahydrofolate (THF) serving as the one-carbon carrier. This reaction serves as the major source of one-carbon groups required for the biosynthesis of purines, thymidylate, methionine, and other important biomolecules. Also exhibits THF-independent aldolase activity toward beta-hydroxyamino acids, producing glycine and aldehydes, via a retro-aldol mechanism. The chain is Serine hydroxymethyltransferase from Salmonella schwarzengrund (strain CVM19633).